The sequence spans 148 residues: Large ribosomal subunit protein bL9 (148 aa).

It belongs to the bacterial ribosomal protein bL9 family.

Functionally, binds to the 23S rRNA. In Pseudomonas syringae pv. tomato (strain ATCC BAA-871 / DC3000), this protein is Large ribosomal subunit protein bL9.